Consider the following 242-residue polypeptide: Phosphoribosylaminoimidazole-succinocarboxamide synthase (242 aa).

It belongs to the SAICAR synthetase family.

It catalyses the reaction 5-amino-1-(5-phospho-D-ribosyl)imidazole-4-carboxylate + L-aspartate + ATP = (2S)-2-[5-amino-1-(5-phospho-beta-D-ribosyl)imidazole-4-carboxamido]succinate + ADP + phosphate + 2 H(+). It functions in the pathway purine metabolism; IMP biosynthesis via de novo pathway; 5-amino-1-(5-phospho-D-ribosyl)imidazole-4-carboxamide from 5-amino-1-(5-phospho-D-ribosyl)imidazole-4-carboxylate: step 1/2. This chain is Phosphoribosylaminoimidazole-succinocarboxamide synthase, found in Ehrlichia chaffeensis (strain ATCC CRL-10679 / Arkansas).